We begin with the raw amino-acid sequence, 1804 residues long: Collagen alpha-1(XI) chain (1804 aa).

An N-terminal signal peptide occupies residues 1-34; sequence MEPWSRWKTKRWIWDLTISTLALTFLFQAREVRG. The propeptide at 35-511 is N-terminal propeptide; the sequence is AAPVDILKAL…SKGPTISAQE (477 aa). 2 disulfide bridges follow: Cys-60-Cys-242 and Cys-181-Cys-235. The region spanning 70-242 is the Laminin G-like domain; the sequence is DVAYRVTEEA…DYCDHYSPDC (173 aa). Residues 229 to 417 are nonhelical region; sequence KAAYDYCDHY…DFTETSINGH (189 aa). The span at 315 to 329 shows a compositional bias: polar residues; sequence YQTETPRRVSGSNEP. 2 disordered regions span residues 315-334 and 433-506; these read YQTETPRRVSGSNEPNPVEE and EPGM…KGPT. The tract at residues 418–506 is triple-helical region (interrupted); it reads GAYGEKGQKG…YGGDGSKGPT (89 aa). A Collagen-like 1 domain is found at 440-488; that stretch reads GPPGPAGPAGLMGPPGLQGPSGLPGDPGDRGPPGRPGLPGADGLPGPPG. 2 stretches are compositionally biased toward low complexity: residues 447–465 and 477–494; these read PAGLMGPPGLQGPSGLPGD and LPGADGLPGPPGTMLMLP. Positions 507–509 are short nonhelical segment; sequence ISA. Residues 510 to 527 are telopeptide; the sequence is QEAQAQAILQQARIALRG. Positions 526 to 1567 are disordered; it reads RGPPGPMGLT…SIQGDAGDNI (1042 aa). 2 consecutive Collagen-like domains span residues 527-584 and 567-623; these read GPPG…GADG and PPGP…GPPG. The interval 528–1540 is triple-helical region; the sequence is PPGPMGLTGR…PGPPGPPGEV (1013 aa). Composition is skewed to gly residues over residues 539-548 and 581-590; these read GPVGGPGSAG and GADGGRGMPG. Position 610 is an allysine (Lys-610). The span at 639–655 shows a compositional bias: low complexity; the sequence is PRGLPGEAGPRGLLGPR. Pro residues predominate over residues 697–708; sequence QGLPGPQGPIGP. Over residues 715-726 the composition is skewed to low complexity; it reads QGKPGLAGLPGA. Positions 728-781 constitute a Collagen-like 4 domain; it reads GPPGHPGKEGQSGEKGALGPPGPQGPIGYPGPRGVKGADGVRGLKGSKGEKGED. Residues 805 to 814 show a composition bias toward basic and acidic residues; sequence RGEDGPEGPK. Composition is skewed to low complexity over residues 873–901, 916–925, and 969–979; these read KPGPRGQRGPTGPRGSRGARGPTGKPGPK, RGPQGPQGPV, and PQGPTGETGPI. Over residues 1040 to 1049 the composition is skewed to gly residues; that stretch reads GLKGGEGPQG. Pro residues predominate over residues 1074–1083; the sequence is RPGPQGPPGP. Residues 1084–1108 are compositionally biased toward low complexity; that stretch reads AGEKGAPGEKGPQGPAGRDGVQGPV. Positions 1160-1169 are enriched in gly residues; that stretch reads GIAGGDGEPG. Residues 1216 to 1227 show a composition bias toward pro residues; that stretch reads MGPPGPPGPRGP. 2 stretches are compositionally biased toward low complexity: residues 1240–1249 and 1282–1296; these read PGSIGSVGVV and AGPPGAAGPAGIKGP. The span at 1341-1360 shows a compositional bias: pro residues; that stretch reads QPGPPGPSGEAGPPGPPGKR. Low complexity-rich tracts occupy residues 1383-1392 and 1417-1426; these read AEGPPGKTGP and QGLPGAAGQD. 2 consecutive Collagen-like domains span residues 1427–1482 and 1481–1539; these read GPPG…SPGA and GAKG…PPGE. Positions 1428–1437 are enriched in pro residues; the sequence is PPGPLGPPGL. Allysine is present on Lys-1450. Residues 1453–1462 show a composition bias toward low complexity; it reads PGLIGLIGPP. Residues 1481–1490 are compositionally biased toward gly residues; it reads GAKGDGGIPG. A compositionally biased stretch (pro residues) spans 1491–1507; that stretch reads PAGPIGPPGPPGLPGPA. Positions 1509–1519 are enriched in low complexity; it reads PKGNKGSSGPT. The span at 1528-1537 shows a compositional bias: pro residues; it reads PGPPGPPGPP. The nonhelical region (C-terminal) stretch occupies residues 1541-1561; it reads IQPLPILSPKKTRRHTESIQG. The propeptide at 1562–1804 is C-terminal propeptide; it reads DAGDNILDYS…FEVGPACFLG (243 aa). The Fibrillar collagen NC1 domain maps to 1575–1803; the sequence is EEIFGSLNSL…GFEVGPACFL (229 aa). A disulfide bond links Cys-1605 and Cys-1637. Positions 1623, 1625, 1626, 1628, and 1631 each coordinate Ca(2+). Asn-1638 is a glycosylation site (N-linked (GlcNAc...) asparagine). Cystine bridges form between Cys-1646/Cys-1801 and Cys-1712/Cys-1755.

Belongs to the fibrillar collagen family. In terms of assembly, trimers composed of three different chains: alpha 1(XI), alpha 2(XI), and alpha 3(XI). Alpha 3(XI) is a post-translational modification of alpha 1(II). Alpha 1(V) can also be found instead of alpha 3(XI)=1(II). In terms of processing, prolines at the third position of the tripeptide repeating unit (G-X-Y) are hydroxylated in some or all of the chains. Post-translationally, N-glycosylated.

The protein resides in the secreted. It localises to the extracellular space. The protein localises to the extracellular matrix. Its function is as follows. May play an important role in fibrillogenesis by controlling lateral growth of collagen II fibrils. This chain is Collagen alpha-1(XI) chain (Col11a1), found in Mus musculus (Mouse).